A 303-amino-acid chain; its full sequence is Short chain dehydrogenase pigC (303 aa).

The NADP(+) site is built by Ile-45, Asp-103, Asn-130, Arg-164, Tyr-196, Lys-200, and Thr-231. Residue Tyr-196 is the Proton donor of the active site. The Lowers pKa of active site Tyr role is filled by Lys-200.

The protein belongs to the short-chain dehydrogenases/reductases (SDR) family.

It functions in the pathway secondary metabolite biosynthesis. In terms of biological role, short chain dehydrogenase; part of the gene cluster that mediates the biosynthesis of azaphilone pigments (MonAzPs), a complex mixture of compounds with a common azaphilone skeleton very widely used as food colorants. Within the pathway, pigC intercepts the very reactive benzaldehyde produced by the nrPKS pigA to reduce the omega-1 carbonyl to the alcohol to provide the first stable enzyme-free MonAzPs intermediate, 6-(4-hydroxy-2-oxopentyl)-3-methyl-2,4-dioxocyclohexane carbaldehyde, also known as M7PKS-1. The first step of the pathway is performed by the nrPKS pigA that forms the hexaketide precursor from successive condensations of five malonyl-CoA units, with a simple acetyl-CoA starter unit. The role of esterase pigG is not clear, but it may play at most a supplementary role in the formation of the benzaldehyde produced by the pigA nrPKS. This very reactive benzaldehyde is intercepted by the pigC ketoreductase that to provide the first stable enzyme-free MonAzPs intermediate, M7PKS-1. The FAD-dependent monooxygenase pigN hydroxylates M7PKS-1 at C-4, which triggers the formation of the pyran ring. PigJ, pigK and pigD are involved in the acetylation of the pyran ring. PigJ and pigK form the two subunits of a dedicated fungal FAS that produces the side chain fatty acyl moiety of MonAzPs and pigD transfers the fatty acyl chain to the C-4 alcohol. PigM and pigO are involved in the elimination of the omega-1 alcohol. PigM acts as an O-acetyltransferase that synthesizes the putative O-11 acetyl intermediate whereas pigO eliminates acetic acid to yield an intermediate with a C10(11) double bond. The dehydration of the C-11 alcohol followed by the reduction of the C6(7) double bond by the NAD(P)H-dependent oxidoreductase pigE increases the electrophilicity of the C-5 ketone of the resulting acyl benzopyran. This in turn sets up the C-5 ketone for an intramolecular Knoevenagel aldol condensation with the C-20 enol of the side chain. This condensation affords the characteristic linear tricyclic carbon skeletons of the yellow pigments that serve as the common precursors for the classical yellow pigments monascin and ankaflavin, orange pigments rubopunctatin and monascorubrin, and red pigments ribropunctamine and monascorubramine. The FAD-dependent oxidoreductase pigF is especially invoved in the biosynthesis of orange and red pigments via desaturation of C6(7). The protein is Short chain dehydrogenase pigC of Monascus ruber (Mold).